We begin with the raw amino-acid sequence, 427 residues long: Trigger factor (427 aa).

The region spanning 160 to 240 (TDTVIGDVVK…VKEVKRLELP (81 aa)) is the PPIase FKBP-type domain.

It belongs to the FKBP-type PPIase family. Tig subfamily.

Its subcellular location is the cytoplasm. It catalyses the reaction [protein]-peptidylproline (omega=180) = [protein]-peptidylproline (omega=0). Involved in protein export. Acts as a chaperone by maintaining the newly synthesized protein in an open conformation. Functions as a peptidyl-prolyl cis-trans isomerase. The protein is Trigger factor of Chlorobium limicola (strain DSM 245 / NBRC 103803 / 6330).